A 307-amino-acid chain; its full sequence is Glycerol-3-phosphate dehydrogenase [NAD(P)+] (307 aa).

Trp-14, Arg-34, Arg-35, and Lys-82 together coordinate NADPH. Sn-glycerol 3-phosphate contacts are provided by Lys-82 and Gly-110. Ser-114 contacts NADPH. 5 residues coordinate sn-glycerol 3-phosphate: Lys-165, Asp-218, Ser-228, Arg-229, and Asn-230. The active-site Proton acceptor is Lys-165. Arg-229 lines the NADPH pocket. Glu-255 contributes to the NADPH binding site.

The protein belongs to the NAD-dependent glycerol-3-phosphate dehydrogenase family.

The protein localises to the cytoplasm. The enzyme catalyses sn-glycerol 3-phosphate + NAD(+) = dihydroxyacetone phosphate + NADH + H(+). The catalysed reaction is sn-glycerol 3-phosphate + NADP(+) = dihydroxyacetone phosphate + NADPH + H(+). It functions in the pathway membrane lipid metabolism; glycerophospholipid metabolism. Functionally, catalyzes the reduction of the glycolytic intermediate dihydroxyacetone phosphate (DHAP) to sn-glycerol 3-phosphate (G3P), the key precursor for phospholipid synthesis. This Trichormus variabilis (strain ATCC 29413 / PCC 7937) (Anabaena variabilis) protein is Glycerol-3-phosphate dehydrogenase [NAD(P)+].